Here is a 142-residue protein sequence, read N- to C-terminus: Large ribosomal subunit protein uL11 (142 aa).

Belongs to the universal ribosomal protein uL11 family. Part of the ribosomal stalk of the 50S ribosomal subunit. Interacts with L10 and the large rRNA to form the base of the stalk. L10 forms an elongated spine to which L12 dimers bind in a sequential fashion forming a multimeric L10(L12)X complex. Post-translationally, one or more lysine residues are methylated.

Functionally, forms part of the ribosomal stalk which helps the ribosome interact with GTP-bound translation factors. The sequence is that of Large ribosomal subunit protein uL11 from Acinetobacter baylyi (strain ATCC 33305 / BD413 / ADP1).